A 144-amino-acid polypeptide reads, in one-letter code: Transcription antitermination protein NusB (144 aa).

The protein belongs to the NusB family.

Functionally, involved in transcription antitermination. Required for transcription of ribosomal RNA (rRNA) genes. Binds specifically to the boxA antiterminator sequence of the ribosomal RNA (rrn) operons. This is Transcription antitermination protein NusB from Histophilus somni (strain 129Pt) (Haemophilus somnus).